Here is an 80-residue protein sequence, read N- to C-terminus: Cell division protein ZapB (80 aa).

A coiled-coil region spans residues 3–80 (LEILEQLEAK…GLLGKMEEVE (78 aa)). Residues 41–62 (LEQANNGRSEVEQEAQKARDEQ) are disordered. Residues 49–62 (SEVEQEAQKARDEQ) are compositionally biased toward basic and acidic residues.

The protein belongs to the ZapB family. Homodimer. The ends of the coiled-coil dimer bind to each other, forming polymers. Interacts with FtsZ.

The protein resides in the cytoplasm. Functionally, non-essential, abundant cell division factor that is required for proper Z-ring formation. It is recruited early to the divisome by direct interaction with FtsZ, stimulating Z-ring assembly and thereby promoting cell division earlier in the cell cycle. Its recruitment to the Z-ring requires functional FtsA or ZipA. This Aliivibrio salmonicida (strain LFI1238) (Vibrio salmonicida (strain LFI1238)) protein is Cell division protein ZapB.